We begin with the raw amino-acid sequence, 221 residues long: Probable septum site-determining protein MinC (221 aa).

It belongs to the MinC family. In terms of assembly, interacts with MinD and FtsZ.

In terms of biological role, cell division inhibitor that blocks the formation of polar Z ring septums. Rapidly oscillates between the poles of the cell to destabilize FtsZ filaments that have formed before they mature into polar Z rings. Prevents FtsZ polymerization. In Shewanella sp. (strain ANA-3), this protein is Probable septum site-determining protein MinC.